Reading from the N-terminus, the 671-residue chain is DNA ligase (671 aa).

NAD(+) is bound by residues 32–36 (DAEYD), 81–82 (SL), and E113. Residue K115 is the N6-AMP-lysine intermediate of the active site. NAD(+) contacts are provided by R136, E173, K290, and K314. Residues C408, C411, C426, and C432 each contribute to the Zn(2+) site. In terms of domain architecture, BRCT spans 593-671 (EIDSPFAGKT…EAEMIRLLGA (79 aa)).

It belongs to the NAD-dependent DNA ligase family. LigA subfamily. Requires Mg(2+) as cofactor. Mn(2+) serves as cofactor.

It catalyses the reaction NAD(+) + (deoxyribonucleotide)n-3'-hydroxyl + 5'-phospho-(deoxyribonucleotide)m = (deoxyribonucleotide)n+m + AMP + beta-nicotinamide D-nucleotide.. Functionally, DNA ligase that catalyzes the formation of phosphodiester linkages between 5'-phosphoryl and 3'-hydroxyl groups in double-stranded DNA using NAD as a coenzyme and as the energy source for the reaction. It is essential for DNA replication and repair of damaged DNA. The chain is DNA ligase from Salmonella paratyphi C (strain RKS4594).